Consider the following 503-residue polypeptide: Probable cytosol aminopeptidase (503 aa).

Positions 270 and 275 each coordinate Mn(2+). The active site involves lysine 282. Residues aspartate 293, aspartate 352, and glutamate 354 each coordinate Mn(2+). Arginine 356 is an active-site residue.

This sequence belongs to the peptidase M17 family. Mn(2+) serves as cofactor.

The protein resides in the cytoplasm. The enzyme catalyses Release of an N-terminal amino acid, Xaa-|-Yaa-, in which Xaa is preferably Leu, but may be other amino acids including Pro although not Arg or Lys, and Yaa may be Pro. Amino acid amides and methyl esters are also readily hydrolyzed, but rates on arylamides are exceedingly low.. It carries out the reaction Release of an N-terminal amino acid, preferentially leucine, but not glutamic or aspartic acids.. Its function is as follows. Presumably involved in the processing and regular turnover of intracellular proteins. Catalyzes the removal of unsubstituted N-terminal amino acids from various peptides. The protein is Probable cytosol aminopeptidase of Edwardsiella ictaluri (strain 93-146).